We begin with the raw amino-acid sequence, 246 residues long: tRNA (guanine-N(1)-)-methyltransferase (246 aa).

Residue G114 coordinates S-adenosyl-L-methionine.

Belongs to the RNA methyltransferase TrmD family. As to quaternary structure, homodimer.

The protein localises to the cytoplasm. It carries out the reaction guanosine(37) in tRNA + S-adenosyl-L-methionine = N(1)-methylguanosine(37) in tRNA + S-adenosyl-L-homocysteine + H(+). In terms of biological role, specifically methylates guanosine-37 in various tRNAs. The sequence is that of tRNA (guanine-N(1)-)-methyltransferase from Novosphingobium aromaticivorans (strain ATCC 700278 / DSM 12444 / CCUG 56034 / CIP 105152 / NBRC 16084 / F199).